An 82-amino-acid polypeptide reads, in one-letter code: Diphthamide biosynthesis protein 3 (82 aa).

Positions 4-60 constitute a DPH-type MB domain; sequence FHDEVEIEDFQYDEDSETYFYPCPCGDNFAITKEDLENGEDVATCPSCSLIIKVIYD. Cys-26, Cys-28, Cys-48, and Cys-51 together coordinate Fe cation.

The protein belongs to the DPH3 family. As to quaternary structure, component of the 2-(3-amino-3-carboxypropyl)histidine synthase complex composed of DPH1, DPH2, DPH3 and a NADH-dependent reductase. Interacts with SERGEF. Fe(2+) is required as a cofactor. As to expression, widely expressed with highest levels in heart, liver, kidney and testis.

It is found in the cytoplasm. The protein resides in the nucleus. The catalysed reaction is [3Fe-4S](1+)-[protein] + Fe(2+)-[Dph3] = [3Fe-4S](0)-[protein] + Fe(3+)-[Dph3]. It catalyses the reaction 2 [3Fe-4S](0)-[protein] + 2 Fe(2+)-[Dph3] + NADH = 2 [4Fe-4S](1+)-[protein] + 2 [Dph3] + NAD(+) + H(+). Its pathway is protein modification; peptidyl-diphthamide biosynthesis. Functionally, required for the first step of diphthamide biosynthesis, a post-translational modification of histidine which occurs in elongation factor 2. DPH1 and DPH2 transfer a 3-amino-3-carboxypropyl (ACP) group from S-adenosyl-L-methionine (SAM) to a histidine residue, the reaction is assisted by a reduction system comprising DPH3 and a NADH-dependent reductase. Acts as an electron donor to reduce the Fe-S cluster in DPH1-DPH2 keeping the [4Fe-4S] clusters in the active and reduced state. Restores iron to DPH1-DPH2 iron-sulfur clusters which have degraded from [4Fe-4S] to [3Fe-4S] by donating an iron atom to reform [4Fe-4S] clusters, in a manner dependent on the presence of elongation factor 2 and SAM. Associates with the elongator complex and is required for tRNA Wobble base modifications mediated by the elongator complex. The elongator complex is required for multiple tRNA modifications, including mcm5U (5-methoxycarbonylmethyl uridine), mcm5s 2U (5-methoxycarbonylmethyl-2-thiouridine), and ncm5U (5-carbamoylmethyl uridine). The polypeptide is Diphthamide biosynthesis protein 3 (Mus musculus (Mouse)).